Here is a 323-residue protein sequence, read N- to C-terminus: tRNA U34 carboxymethyltransferase (323 aa).

Carboxy-S-adenosyl-L-methionine is bound by residues Lys-91, Trp-105, Lys-110, Gly-130, 152 to 154 (DPT), 181 to 182 (IE), Met-196, Tyr-200, and Arg-315.

The protein belongs to the class I-like SAM-binding methyltransferase superfamily. CmoB family. In terms of assembly, homotetramer.

The enzyme catalyses carboxy-S-adenosyl-L-methionine + 5-hydroxyuridine(34) in tRNA = 5-carboxymethoxyuridine(34) in tRNA + S-adenosyl-L-homocysteine + H(+). Its function is as follows. Catalyzes carboxymethyl transfer from carboxy-S-adenosyl-L-methionine (Cx-SAM) to 5-hydroxyuridine (ho5U) to form 5-carboxymethoxyuridine (cmo5U) at position 34 in tRNAs. This Escherichia coli O139:H28 (strain E24377A / ETEC) protein is tRNA U34 carboxymethyltransferase.